Consider the following 353-residue polypeptide: Cyanuric acid amidohydrolase (353 aa).

The tract at residues 1–90 (MSSTALYTVP…NIFVRDERQY (90 aa)) is RU A. Residues R49 and 69 to 70 (SG) each bind substrate. Positions 96–231 (GLVTAVGRTR…CHILVVAESD (136 aa)) are RU B. Residue K145 is part of the active site. Substrate contacts are provided by residues R177 and 214–215 (SS). The active-site Nucleophile is S214. The segment at 237–353 (LRAAHTAMRD…TANATGEASR (117 aa)) is RU C. E275 is a Mg(2+) binding site. Substrate contacts are provided by residues R302 and 321 to 322 (SG). Mg(2+) contacts are provided by A324, Q327, G328, P329, and G332.

The protein belongs to the cyclic amide hydrolase (CyAH) family. Homotetramer.

It catalyses the reaction cyanurate + H2O = 1-carboxybiuret + H(+). It functions in the pathway xenobiotic degradation; atrazine degradation; biuret from cyanurate: step 1/1. With respect to regulation, inhibited by barbituric acid. Responsible for the hydrolysis of cyanuric acid, an intermediate formed during catabolism of s-triazine based compounds in herbicides such as atrazine and polymers such as melamine. Catalyzes the hydrolytic opening of the s-triazine ring of cyanuric acid (2,4,6-trihydroxy-s-triazine) to yield carbon dioxide and carboxybiuret, which spontaneously decarboxylates to biuret. Required for growth on melamine or cyanuric acid as sole nitrogen source. This chain is Cyanuric acid amidohydrolase, found in Rhodococcus sp.